A 354-amino-acid chain; its full sequence is Small ribosomal subunit biogenesis GTPase RsgA (354 aa).

Residues 1 to 46 (MSKKKPLSQGQLRRMRANHEKRLNRDSGDKNTPELQDSSLGPEQSG) form a disordered region. Residues 17 to 32 (ANHEKRLNRDSGDKNT) show a composition bias toward basic and acidic residues. Residues 33-46 (PELQDSSLGPEQSG) are compositionally biased toward polar residues. Residues 108–276 (HSSLSRPDLY…LIDSPGVREF (169 aa)) form the CP-type G domain. GTP contacts are provided by residues 164 to 167 (NKID) and 218 to 226 (GQSGVGKSS). Zn(2+)-binding residues include cysteine 300, cysteine 305, histidine 307, and cysteine 313.

The protein belongs to the TRAFAC class YlqF/YawG GTPase family. RsgA subfamily. As to quaternary structure, monomer. Associates with 30S ribosomal subunit, binds 16S rRNA. Requires Zn(2+) as cofactor.

The protein localises to the cytoplasm. Its function is as follows. One of several proteins that assist in the late maturation steps of the functional core of the 30S ribosomal subunit. Helps release RbfA from mature subunits. May play a role in the assembly of ribosomal proteins into the subunit. Circularly permuted GTPase that catalyzes slow GTP hydrolysis, GTPase activity is stimulated by the 30S ribosomal subunit. The chain is Small ribosomal subunit biogenesis GTPase RsgA from Shewanella oneidensis (strain ATCC 700550 / JCM 31522 / CIP 106686 / LMG 19005 / NCIMB 14063 / MR-1).